Here is a 116-residue protein sequence, read N- to C-terminus: Iron-sulfur cluster insertion protein ErpA (116 aa).

Residues Cys44, Cys108, and Cys110 each coordinate iron-sulfur cluster.

The protein belongs to the HesB/IscA family. Homodimer. Requires iron-sulfur cluster as cofactor.

Functionally, required for insertion of 4Fe-4S clusters for at least IspG. This Shewanella sp. (strain ANA-3) protein is Iron-sulfur cluster insertion protein ErpA.